Here is a 616-residue protein sequence, read N- to C-terminus: Chaperone protein HscA (616 aa).

It belongs to the heat shock protein 70 family.

In terms of biological role, chaperone involved in the maturation of iron-sulfur cluster-containing proteins. Has a low intrinsic ATPase activity which is markedly stimulated by HscB. Involved in the maturation of IscU. The protein is Chaperone protein HscA of Salmonella agona (strain SL483).